The primary structure comprises 121 residues: Aspartate 1-decarboxylase (121 aa).

Serine 25 serves as the catalytic Schiff-base intermediate with substrate; via pyruvic acid. A Pyruvic acid (Ser) modification is found at serine 25. A substrate-binding site is contributed by threonine 57. Catalysis depends on tyrosine 58, which acts as the Proton donor. Position 73-75 (73-75 (GAA)) interacts with substrate.

The protein belongs to the PanD family. As to quaternary structure, heterooctamer of four alpha and four beta subunits. The cofactor is pyruvate. Post-translationally, is synthesized initially as an inactive proenzyme, which is activated by self-cleavage at a specific serine bond to produce a beta-subunit with a hydroxyl group at its C-terminus and an alpha-subunit with a pyruvoyl group at its N-terminus.

It is found in the cytoplasm. The enzyme catalyses L-aspartate + H(+) = beta-alanine + CO2. It participates in cofactor biosynthesis; (R)-pantothenate biosynthesis; beta-alanine from L-aspartate: step 1/1. In terms of biological role, catalyzes the pyruvoyl-dependent decarboxylation of aspartate to produce beta-alanine. The sequence is that of Aspartate 1-decarboxylase from Maricaulis maris (strain MCS10) (Caulobacter maris).